Reading from the N-terminus, the 343-residue chain is Methionine import ATP-binding protein MetN (343 aa).

The region spanning 2 to 241 (IKLSNITKVF…PKTPLAQKFI (240 aa)) is the ABC transporter domain. 38-45 (GASGAGKS) serves as a coordination point for ATP.

The protein belongs to the ABC transporter superfamily. Methionine importer (TC 3.A.1.24) family. In terms of assembly, the complex is composed of two ATP-binding proteins (MetN), two transmembrane proteins (MetI) and a solute-binding protein (MetQ).

It is found in the cell inner membrane. The enzyme catalyses L-methionine(out) + ATP + H2O = L-methionine(in) + ADP + phosphate + H(+). The catalysed reaction is D-methionine(out) + ATP + H2O = D-methionine(in) + ADP + phosphate + H(+). Part of the ABC transporter complex MetNIQ involved in methionine import. Responsible for energy coupling to the transport system. This Escherichia coli O157:H7 protein is Methionine import ATP-binding protein MetN.